The sequence spans 309 residues: UDP-N-acetylenolpyruvoylglucosamine reductase (309 aa).

The FAD-binding PCMH-type domain maps to 34 to 221 (RVGGPAQVLF…TAAREAAQPI (188 aa)). R179 is an active-site residue. The Proton donor role is filled by S228. The active site involves E298.

This sequence belongs to the MurB family. It depends on FAD as a cofactor.

It is found in the cytoplasm. The catalysed reaction is UDP-N-acetyl-alpha-D-muramate + NADP(+) = UDP-N-acetyl-3-O-(1-carboxyvinyl)-alpha-D-glucosamine + NADPH + H(+). It functions in the pathway cell wall biogenesis; peptidoglycan biosynthesis. Cell wall formation. The polypeptide is UDP-N-acetylenolpyruvoylglucosamine reductase (Methylorubrum populi (strain ATCC BAA-705 / NCIMB 13946 / BJ001) (Methylobacterium populi)).